Here is a 1379-residue protein sequence, read N- to C-terminus: ATPase histone chaperone YTA7 (1379 aa).

2 disordered regions span residues M1 to R39 and D54 to N243. The residue at position 2 (A2) is an N-acetylalanine. Phosphoserine is present on residues S11 and S17. The span at V61–N78 shows a compositional bias: basic and acidic residues. S94 is modified (phosphoserine). Residues E97–N110 are compositionally biased toward basic and acidic residues. 2 stretches are compositionally biased toward acidic residues: residues P119–S152 and D170–G184. Positions S192–S207 are enriched in basic residues. T212 carries the post-translational modification Phosphothreonine. A compositionally biased stretch (basic residues) spans R218–R228. At T229 the chain carries Phosphothreonine. A phosphoserine mark is found at S241, S259, and S285. The interval N302–G330 is disordered. Residues S367, S369, and S370 each carry the phosphoserine modification. A disordered region spans residues L375 to P396. An AAA-ATPase; required for its chromatin boundary function region spans residues V450–D578. ATP is bound at residue G454–T461. S735 is modified (phosphoserine). The 128-residue stretch at R974 to I1101 folds into the Bromo domain. A Phosphoserine modification is found at S1142. Disordered stretches follow at residues T1233–N1274 and L1291–S1316. Over residues E1244–E1254 the composition is skewed to basic and acidic residues. S1256 carries the phosphoserine modification. Residues S1256–N1274 show a composition bias toward polar residues. Residues E1293–S1316 show a composition bias toward basic and acidic residues.

Belongs to the AAA ATPase family. In terms of assembly, interacts with CSE4/CENP-A. Interacts with SCM3. Interacts with SPT16. Interacts with POB3. Interacts with the casein kinase II complex subunits CKA1, CKA2, CKB1 and CKB2. Interacts with RNA polymerase II. Interacts (via Bromo domain) with histone H3. Interacts (via Bromo domain) with histone H4. In terms of processing, phosphorylated by CDK1 and casein kinase II during S-phase, which leads to its eviction from histone gene promoters and promotes histone gene transcription.

The protein resides in the chromosome. Its subcellular location is the centromere. It is found in the nucleus. Its function is as follows. Functions as an ATP-dependent nucleosome disassembly factor that helps evict canonical histone H3 from the 5'-end of genes upon their induction. Also contributes to kinetochore assembly by cooperating with SCM3 to load the histone H3 variant CSE4/CENP-A at centromeres. Provides a chromatin boundary function at the 5'-end of genes that restricts access by RTT106 and thus prevents ectopic spreading of repressive chromatin into coding regions. Also prevents heterochromatin spreading downstream of the silent mating-type locus HMR, this function is independent of the tRNA boundary element. Contributes to appropriate cell cycle regulation of histone gene expression by recruiting RNA polymerase II to histone genes, and subsequent CDK1- and casein kinase II-dependent eviction from chromatin is required to promote transcriptional elongation. The polypeptide is ATPase histone chaperone YTA7 (Saccharomyces cerevisiae (strain ATCC 204508 / S288c) (Baker's yeast)).